We begin with the raw amino-acid sequence, 321 residues long: Inner membrane protein YtfF (321 aa).

Topologically, residues 1–4 are cytoplasmic; sequence MISG. A helical transmembrane segment spans residues 5 to 25; the sequence is VLYALLAGLMWGLIFVGPLIV. The EamA domain maps to 13–141; sequence LMWGLIFVGP…IGIGLACVNI (129 aa). Residues 26–30 lie on the Periplasmic side of the membrane; that stretch reads PEYPA. A helical transmembrane segment spans residues 31–51; sequence MLQSMGRYLALGLIALPIAWL. Residues 52–65 are Cytoplasmic-facing; that stretch reads GRVRLRQLARRDWL. Residues 66–86 traverse the membrane as a helical segment; the sequence is TALMLTMMGNLIYYFCLASAI. The Periplasmic segment spans residues 87–92; that stretch reads QRTGAP. The helical transmembrane segment at 93 to 113 threads the bilayer; sequence VSTMIIGTLPVVIPVFANLLY. At 114–120 the chain is on the cytoplasmic side; that stretch reads SQRDGKL. The chain crosses the membrane as a helical span at residues 121–141; sequence AWGKLAPALICIGIGLACVNI. The Periplasmic portion of the chain corresponds to 142–154; it reads AELNHGLPDFDWA. Residues 155 to 175 form a helical membrane-spanning segment; that stretch reads RYTSGIVLALVSVVCWAWYAL. Over 176 to 194 the chain is Cytoplasmic; sequence RNARWLRENPDKHPMMWAT. The helical transmembrane segment at 195-215 threads the bilayer; it reads AQALVTLPVSLIGYLVACYWL. Residues 216 to 230 lie on the Periplasmic side of the membrane; that stretch reads NTQTPDFSLPFGPRP. A helical transmembrane segment spans residues 231 to 251; the sequence is LVFISLMVAIAVLCSWVGALC. The Cytoplasmic portion of the chain corresponds to 252–261; sequence WNVASQLLPT. A helical transmembrane segment spans residues 262-282; that stretch reads VILGPLIVFETLAGLLYTFLL. The Periplasmic portion of the chain corresponds to 283-285; sequence RQQ. A helical membrane pass occupies residues 286 to 306; the sequence is MPPLMTLSGIALLVIGVVIAV. Over 307–321 the chain is Cytoplasmic; that stretch reads RAKPEKPLTESVSES.

It localises to the cell inner membrane. The chain is Inner membrane protein YtfF (ytfF) from Escherichia coli (strain K12).